Consider the following 454-residue polypeptide: Bifunctional protein GlmU (454 aa).

A pyrophosphorylase region spans residues 1–228 (MSPLHVVILA…PFEVQGVNNR (228 aa)). UDP-N-acetyl-alpha-D-glucosamine contacts are provided by residues 9-12 (LAAG), Lys23, Gln74, 79-80 (GT), 101-103 (YGD), Gly138, Glu153, Asn168, and Asn226. Position 103 (Asp103) interacts with Mg(2+). Residue Asn226 coordinates Mg(2+). The segment at 229–249 (LQLAELERWYQRQQAERLMTE) is linker. An N-acetyltransferase region spans residues 250–454 (GASLADPARI…IAGWERPKKA (205 aa)). 2 residues coordinate UDP-N-acetyl-alpha-D-glucosamine: Arg332 and Lys350. His362 serves as the catalytic Proton acceptor. The UDP-N-acetyl-alpha-D-glucosamine site is built by Tyr365 and Asn376. Acetyl-CoA is bound by residues Ala379, 385–386 (NY), Ser404, Ala422, and Arg439.

This sequence in the N-terminal section; belongs to the N-acetylglucosamine-1-phosphate uridyltransferase family. The protein in the C-terminal section; belongs to the transferase hexapeptide repeat family. Homotrimer. Mg(2+) serves as cofactor.

The protein localises to the cytoplasm. It catalyses the reaction alpha-D-glucosamine 1-phosphate + acetyl-CoA = N-acetyl-alpha-D-glucosamine 1-phosphate + CoA + H(+). The catalysed reaction is N-acetyl-alpha-D-glucosamine 1-phosphate + UTP + H(+) = UDP-N-acetyl-alpha-D-glucosamine + diphosphate. It functions in the pathway nucleotide-sugar biosynthesis; UDP-N-acetyl-alpha-D-glucosamine biosynthesis; N-acetyl-alpha-D-glucosamine 1-phosphate from alpha-D-glucosamine 6-phosphate (route II): step 2/2. The protein operates within nucleotide-sugar biosynthesis; UDP-N-acetyl-alpha-D-glucosamine biosynthesis; UDP-N-acetyl-alpha-D-glucosamine from N-acetyl-alpha-D-glucosamine 1-phosphate: step 1/1. Its pathway is bacterial outer membrane biogenesis; LPS lipid A biosynthesis. Its function is as follows. Catalyzes the last two sequential reactions in the de novo biosynthetic pathway for UDP-N-acetylglucosamine (UDP-GlcNAc). The C-terminal domain catalyzes the transfer of acetyl group from acetyl coenzyme A to glucosamine-1-phosphate (GlcN-1-P) to produce N-acetylglucosamine-1-phosphate (GlcNAc-1-P), which is converted into UDP-GlcNAc by the transfer of uridine 5-monophosphate (from uridine 5-triphosphate), a reaction catalyzed by the N-terminal domain. This chain is Bifunctional protein GlmU, found in Marinobacter nauticus (strain ATCC 700491 / DSM 11845 / VT8) (Marinobacter aquaeolei).